The sequence spans 64 residues: Large ribosomal subunit protein bL33 (64 aa).

It belongs to the bacterial ribosomal protein bL33 family.

The polypeptide is Large ribosomal subunit protein bL33 (Microcystis aeruginosa (strain NIES-843 / IAM M-2473)).